We begin with the raw amino-acid sequence, 105 residues long: UPF0145 protein lpg0197 (105 aa).

This sequence belongs to the UPF0145 family.

This is UPF0145 protein lpg0197 from Legionella pneumophila subsp. pneumophila (strain Philadelphia 1 / ATCC 33152 / DSM 7513).